Here is a 308-residue protein sequence, read N- to C-terminus: Pantoate--beta-alanine ligase (308 aa).

Position 2 (A2) is a propeptide, removed; partial.

The protein belongs to the pantothenate synthetase family. As to quaternary structure, homodimer. Expressed at low levels in leaf and root.

It localises to the cytoplasm. The enzyme catalyses (R)-pantoate + beta-alanine + ATP = (R)-pantothenate + AMP + diphosphate + H(+). Its pathway is cofactor biosynthesis; (R)-pantothenate biosynthesis; (R)-pantothenate from (R)-pantoate and beta-alanine: step 1/1. This Lotus japonicus (Lotus corniculatus var. japonicus) protein is Pantoate--beta-alanine ligase (PANC).